Here is a 602-residue protein sequence, read N- to C-terminus: Lysine--tRNA ligase, chloroplastic/mitochondrial (602 aa).

Low complexity predominate over residues 50–62 (SSSSSSATTAETS). Residues 50–83 (SSSSSSATTAETSKPSGRNRRSASSSNSTSDREA) are disordered. Positions 136-214 (VSIAGRVVAR…SICVNSFSIL (79 aa)) form a DNA-binding region, OB. 2 residues coordinate substrate: Gly285 and Glu309. Residues 331-333 (RNE) and 339-340 (HN) each bind ATP. 2 residues coordinate substrate: Glu347 and Tyr349. Residues Glu492 and Glu499 each contribute to the Ca(2+) site. ATP is bound at residue 499–500 (EM). Residues Asn502 and Glu506 each contribute to the substrate site. Basic and acidic residues predominate over residues 524-543 (HNAKRAEAVRESPEPNAKKD). The segment at 524–550 (HNAKRAEAVRESPEPNAKKDDDDDESY) is disordered. Residue 575–578 (GIDR) coordinates ATP.

It belongs to the class-II aminoacyl-tRNA synthetase family. Requires Ca(2+) as cofactor.

Its subcellular location is the plastid. It is found in the chloroplast. It localises to the mitochondrion. The enzyme catalyses tRNA(Lys) + L-lysine + ATP = L-lysyl-tRNA(Lys) + AMP + diphosphate. Functionally, catalyzes the specific attachment of an amino acid to its cognate tRNA in a 2 step reaction: the amino acid (AA) is first activated by ATP to form AA-AMP and then transferred to the acceptor end of the tRNA. The sequence is that of Lysine--tRNA ligase, chloroplastic/mitochondrial from Arabidopsis thaliana (Mouse-ear cress).